Here is a 224-residue protein sequence, read N- to C-terminus: 7-cyano-7-deazaguanine synthase (224 aa).

8 to 18 is an ATP binding site; it reads LSGGMDSAAVI. Zn(2+) contacts are provided by C186, C196, C199, and C202.

This sequence belongs to the QueC family. It depends on Zn(2+) as a cofactor.

The enzyme catalyses 7-carboxy-7-deazaguanine + NH4(+) + ATP = 7-cyano-7-deazaguanine + ADP + phosphate + H2O + H(+). Its pathway is purine metabolism; 7-cyano-7-deazaguanine biosynthesis. Functionally, catalyzes the ATP-dependent conversion of 7-carboxy-7-deazaguanine (CDG) to 7-cyano-7-deazaguanine (preQ(0)). This is 7-cyano-7-deazaguanine synthase from Xanthomonas axonopodis pv. citri (strain 306).